The sequence spans 363 residues: Histidinol-phosphate aminotransferase (363 aa).

Lysine 215 is modified (N6-(pyridoxal phosphate)lysine).

The protein belongs to the class-II pyridoxal-phosphate-dependent aminotransferase family. Histidinol-phosphate aminotransferase subfamily. In terms of assembly, homodimer. Pyridoxal 5'-phosphate serves as cofactor.

The catalysed reaction is L-histidinol phosphate + 2-oxoglutarate = 3-(imidazol-4-yl)-2-oxopropyl phosphate + L-glutamate. It participates in amino-acid biosynthesis; L-histidine biosynthesis; L-histidine from 5-phospho-alpha-D-ribose 1-diphosphate: step 7/9. The chain is Histidinol-phosphate aminotransferase from Buchnera aphidicola subsp. Diuraphis noxia.